We begin with the raw amino-acid sequence, 201 residues long: Probable GTP-binding protein EngB (201 aa).

The EngB-type G domain occupies 22–197 (TFPEYAFIGR…LNYIESINKE (176 aa)). GTP-binding positions include 30–37 (GRSNVGKS), 57–61 (GKTML), 75–78 (DLPG), 142–145 (TKAD), and 175–178 (ITSS). Residues serine 37 and threonine 59 each contribute to the Mg(2+) site.

Belongs to the TRAFAC class TrmE-Era-EngA-EngB-Septin-like GTPase superfamily. EngB GTPase family. Requires Mg(2+) as cofactor.

In terms of biological role, necessary for normal cell division and for the maintenance of normal septation. The polypeptide is Probable GTP-binding protein EngB (Bacteroides fragilis (strain ATCC 25285 / DSM 2151 / CCUG 4856 / JCM 11019 / LMG 10263 / NCTC 9343 / Onslow / VPI 2553 / EN-2)).